Consider the following 579-residue polypeptide: uncharacterized protein (579 aa).

12 helical membrane-spanning segments follow: residues 20 to 40 (ALWA…VVAI), 54 to 74 (ATVV…MLVA), 86 to 106 (LYLI…LSSG), 142 to 162 (GVAL…GPLA), 174 to 194 (WIFF…AYLI), 204 to 224 (FDWF…FGLQ), 234 to 254 (WIWA…YWQA), 279 to 299 (IAII…YAQA), 310 to 330 (VLFA…GMII), 335 to 355 (PLCV…WLLC), 366 to 386 (LVLP…PLTV), and 467 to 487 (MLLP…LVDF). Residues 516 to 579 (REPEEDCDTQ…DTESTAPSAL (64 aa)) form a disordered region. Low complexity predominate over residues 526-540 (PLRASRPAAAAASRS). A compositionally biased stretch (polar residues) spans 570–579 (DTESTAPSAL).

Belongs to the major facilitator superfamily. EmrB family.

The protein localises to the cell membrane. This is an uncharacterized protein from Mycobacterium tuberculosis (strain ATCC 25618 / H37Rv).